The chain runs to 764 residues: Phosphoribosylformylglycinamidine synthase subunit PurL (764 aa).

His-57 is an active-site residue. ATP contacts are provided by Tyr-60 and Lys-104. Glu-106 is a binding site for Mg(2+). Residues 107-110 (SHNH) and Arg-129 each bind substrate. His-108 acts as the Proton acceptor in catalysis. A Mg(2+)-binding site is contributed by Asp-130. Gln-258 contributes to the substrate binding site. Asp-286 provides a ligand contact to Mg(2+). Substrate is bound at residue 330–332 (ESQ). Positions 518 and 555 each coordinate ATP. Asn-556 is a binding site for Mg(2+). A substrate-binding site is contributed by Ser-558.

It belongs to the FGAMS family. In terms of assembly, monomer. Part of the FGAM synthase complex composed of 1 PurL, 1 PurQ and 2 PurS subunits.

The protein localises to the cytoplasm. The enzyme catalyses N(2)-formyl-N(1)-(5-phospho-beta-D-ribosyl)glycinamide + L-glutamine + ATP + H2O = 2-formamido-N(1)-(5-O-phospho-beta-D-ribosyl)acetamidine + L-glutamate + ADP + phosphate + H(+). Its pathway is purine metabolism; IMP biosynthesis via de novo pathway; 5-amino-1-(5-phospho-D-ribosyl)imidazole from N(2)-formyl-N(1)-(5-phospho-D-ribosyl)glycinamide: step 1/2. Its function is as follows. Part of the phosphoribosylformylglycinamidine synthase complex involved in the purines biosynthetic pathway. Catalyzes the ATP-dependent conversion of formylglycinamide ribonucleotide (FGAR) and glutamine to yield formylglycinamidine ribonucleotide (FGAM) and glutamate. The FGAM synthase complex is composed of three subunits. PurQ produces an ammonia molecule by converting glutamine to glutamate. PurL transfers the ammonia molecule to FGAR to form FGAM in an ATP-dependent manner. PurS interacts with PurQ and PurL and is thought to assist in the transfer of the ammonia molecule from PurQ to PurL. The chain is Phosphoribosylformylglycinamidine synthase subunit PurL from Nocardia farcinica (strain IFM 10152).